We begin with the raw amino-acid sequence, 101 residues long: Movement protein (101 aa).

Residues 30–50 (EVAILSFVALICFYLLYLWVL) traverse the membrane as a helical segment. Residues 75 to 101 (VDRSNPIPNIPAPPSQGNPGPFVPGTG) are disordered.

Belongs to the mastrevirus movement protein family. Interacts with the capsid protein (CP). Part of a MP-CP-viral DNA complex.

It is found in the host membrane. Its function is as follows. Involved in the viral transport within, and between cells. This chain is Movement protein, found in Maize streak virus genotype A (isolate Kenya) (MSV).